We begin with the raw amino-acid sequence, 505 residues long: tRNA-2-methylthio-N(6)-dimethylallyladenosine synthase (505 aa).

The region spanning Arg-14–Val-132 is the MTTase N-terminal domain. Residues Cys-23, Cys-61, Cys-95, Cys-169, Cys-173, and Cys-176 each coordinate [4Fe-4S] cluster. Positions Arg-155–Glu-386 constitute a Radical SAM core domain. The 69-residue stretch at Lys-388–Val-456 folds into the TRAM domain.

It belongs to the methylthiotransferase family. MiaB subfamily. As to quaternary structure, monomer. It depends on [4Fe-4S] cluster as a cofactor.

It is found in the cytoplasm. The catalysed reaction is N(6)-dimethylallyladenosine(37) in tRNA + (sulfur carrier)-SH + AH2 + 2 S-adenosyl-L-methionine = 2-methylsulfanyl-N(6)-dimethylallyladenosine(37) in tRNA + (sulfur carrier)-H + 5'-deoxyadenosine + L-methionine + A + S-adenosyl-L-homocysteine + 2 H(+). In terms of biological role, catalyzes the methylthiolation of N6-(dimethylallyl)adenosine (i(6)A), leading to the formation of 2-methylthio-N6-(dimethylallyl)adenosine (ms(2)i(6)A) at position 37 in tRNAs that read codons beginning with uridine. In Streptomyces viridosporus (strain ATCC 14672 / DSM 40746 / JCM 4963 / KCTC 9882 / NRRL B-12104 / FH 1290) (Streptomyces ghanaensis), this protein is tRNA-2-methylthio-N(6)-dimethylallyladenosine synthase.